Reading from the N-terminus, the 456-residue chain is Chordin-like protein 1 (456 aa).

The first 28 residues, 1-28 (MRRKWRSEDFHFVFFGVLCLLLIDRGKL), serve as a signal peptide directing secretion. VWFC domains follow at residues 36–101 (TYCV…PRCP), 115–181 (KSCE…PVCR), and 262–327 (RVCV…KVCP). The N-linked (GlcNAc...) asparagine glycan is linked to Asn120. The Cell attachment site motif lies at 181-183 (RGD). An N-linked (GlcNAc...) asparagine glycan is attached at Asn295.

Mainly expressed in the ventral retina.

It is found in the secreted. Seems to antagonize the function of BMP4 by binding to it and preventing its interaction with receptors. The polypeptide is Chordin-like protein 1 (CHRDL1) (Gallus gallus (Chicken)).